We begin with the raw amino-acid sequence, 282 residues long: Probable endonuclease 4 (282 aa).

Zn(2+)-binding residues include histidine 69, histidine 109, glutamate 145, aspartate 179, histidine 182, histidine 216, aspartate 229, histidine 231, and glutamate 261.

The protein belongs to the AP endonuclease 2 family. Zn(2+) serves as cofactor.

The enzyme catalyses Endonucleolytic cleavage to 5'-phosphooligonucleotide end-products.. Its function is as follows. Endonuclease IV plays a role in DNA repair. It cleaves phosphodiester bonds at apurinic or apyrimidinic (AP) sites, generating a 3'-hydroxyl group and a 5'-terminal sugar phosphate. This is Probable endonuclease 4 from Magnetococcus marinus (strain ATCC BAA-1437 / JCM 17883 / MC-1).